The following is a 148-amino-acid chain: uncharacterized protein (148 aa).

Low complexity predominate over residues 37-94 (NNNNYNNNNKNNNNNNNNNNNNNNNNNNNNNNNYINSCNSNNNNNNNNNNTKNNNINS). A disordered region spans residues 37–99 (NNNNYNNNNK…NNINSRTDKN (63 aa)).

This is an uncharacterized protein from Dictyostelium discoideum (Social amoeba).